A 58-amino-acid polypeptide reads, in one-letter code: uncharacterized protein (58 aa).

Residues 24–44 traverse the membrane as a helical segment; sequence LSVYLGLATTIVCIVLFFTML.

It localises to the membrane. This is an uncharacterized protein from Haemophilus influenzae (strain ATCC 51907 / DSM 11121 / KW20 / Rd).